The following is a 568-amino-acid chain: Urease subunit alpha (568 aa).

One can recognise a Urease domain in the interval 131–568; sequence GGMDAHIHFI…LPLAQRYFLY (438 aa). Residues His136, His138, and Lys219 each contribute to the Ni(2+) site. An N6-carboxylysine modification is found at Lys219. Residue His221 participates in substrate binding. The Ni(2+) site is built by His248 and His274. His322 (proton donor) is an active-site residue. Asp362 is a Ni(2+) binding site.

It belongs to the metallo-dependent hydrolases superfamily. Urease alpha subunit family. In terms of assembly, heterotrimer of UreA (gamma), UreB (beta) and UreC (alpha) subunits. Three heterotrimers associate to form the active enzyme. Ni cation is required as a cofactor. Carboxylation allows a single lysine to coordinate two nickel ions.

Its subcellular location is the cytoplasm. It carries out the reaction urea + 2 H2O + H(+) = hydrogencarbonate + 2 NH4(+). It functions in the pathway nitrogen metabolism; urea degradation; CO(2) and NH(3) from urea (urease route): step 1/1. This is Urease subunit alpha from Cereibacter sphaeroides (strain ATCC 17025 / ATH 2.4.3) (Rhodobacter sphaeroides).